The chain runs to 246 residues: Auxin-responsive protein IAA25 (246 aa).

The tract at residues 1–22 (MKSSSVAPRLKQERQDDCKFQE) is disordered. Over residues 10 to 22 (LKQERQDDCKFQE) the composition is skewed to basic and acidic residues. Positions 28–32 (LELRL) match the EAR-like (transcriptional repression) motif. The PB1 domain occupies 143-238 (TMFVKVNLEG…SVKRLYIAQD (96 aa)).

This sequence belongs to the Aux/IAA family. In terms of assembly, homodimers and heterodimers. Highly expressed in flowers. Expressed in roots and seedlings.

It is found in the nucleus. In terms of biological role, aux/IAA proteins are short-lived transcriptional factors that function as repressors of early auxin response genes at low auxin concentrations. This is Auxin-responsive protein IAA25 (IAA25) from Oryza sativa subsp. japonica (Rice).